A 1167-amino-acid chain; its full sequence is White collar 1 protein (1167 aa).

Disordered stretches follow at residues 1–91 (MNNN…MSGG) and 307–355 (STPA…GASQ). The segment covering 21-57 (QHQQQQQQQQQQQQQQQQQQQQQQQQQQQQHQHQQQQ) has biased composition (low complexity). Polar residues-rich tracts occupy residues 70–91 (TPPT…MSGG) and 307–325 (STPA…TQTI). Low complexity predominate over residues 335-348 (VTNAPTPAPFTSTP). The PAS 1 domain occupies 381–452 (KLKLGAVDMS…KREFVENNAV (72 aa)). Cysteine 428 carries the S-4a-FMN cysteine modification. Residues 469 to 508 (LINYRKGGKPFLNLLTMIPIPWDTEEIRYFIGFQIDLVEC) form the PAC 1 domain. A PAS 2 domain is found at 574–644 (KQSWDKMLLE…RELKEAQQHT (71 aa)). The PAC 2 domain occupies 650 to 691 (FRIRRKNSGYTWFESHGTLFNEQGKGRKCIILVGRKRPVFAL). The 71-residue stretch at 693 to 763 (RKDLELNGGI…RTIEKARKGK (71 aa)) folds into the PAS 3 domain. Positions 849–861 (MSKSGSSDSTGAM) are enriched in low complexity. Disordered regions lie at residues 849 to 872 (MSKS…GPGQ), 918 to 952 (KKKR…PSGN), 966 to 1047 (QTGR…TGST), and 1060 to 1167 (VNAL…GLSV). The GATA-type zinc-finger motif lies at 934-959 (CANCHTRNTPEWRRGPSGNRDLCNSC). Polar residues predominate over residues 968 to 977 (GRVSPRTSSR). Residues 986-995 (KKSNSPSHSS) are compositionally biased toward low complexity. Residues 1004–1033 (DSPSTTTATKNSPSLRGSSTTAPGTITTDS) show a composition bias toward polar residues. 2 stretches are compositionally biased toward low complexity: residues 1036–1047 (AVASSASGTGST) and 1104–1128 (QHQQ…QQHQ).

In terms of assembly, heterodimer of wc-1 and wc-2. Post-translationally, FMN binds covalently to cysteine after exposure to blue light and is reversed in the dark.

It localises to the nucleus. Its function is as follows. May function as a transcription factor involved in light regulation. Binds and affects blue light regulation of the al-3 gene. Wc-1 and wc-2 proteins interact via homologous PAS domains, bind to promoters of light regulated genes such as frq, and activate transcription. In Neurospora crassa (strain ATCC 24698 / 74-OR23-1A / CBS 708.71 / DSM 1257 / FGSC 987), this protein is White collar 1 protein (wc-1).